A 217-amino-acid polypeptide reads, in one-letter code: Small ribosomal subunit protein uS3c (217 aa).

The KH type-2 domain occupies 46 to 117 (VQKHIKNSSN…RLRMTLIEIA (72 aa)).

This sequence belongs to the universal ribosomal protein uS3 family. As to quaternary structure, part of the 30S ribosomal subunit.

It localises to the plastid. It is found in the chloroplast. This is Small ribosomal subunit protein uS3c (rps3) from Marchantia polymorpha (Common liverwort).